The chain runs to 397 residues: UDP-GlcNAc:betaGal beta-1,3-N-acetylglucosaminyltransferase 7 (397 aa).

The Cytoplasmic portion of the chain corresponds to 1–6 (MSLWKK). The chain crosses the membrane as a helical span at residues 7 to 26 (TLYKSVCLALALLVAVTVFQ). Residues 27–397 (RSVTPGQFLQ…LTCSVKFQVL (371 aa)) lie on the Lumenal side of the membrane. N-linked (GlcNAc...) asparagine glycans are attached at residues N84, N90, N210, and N387.

Belongs to the glycosyltransferase 31 family. In terms of tissue distribution, strongly expressed in placenta and colon. Moderately expressed in lung, stomach, small intestine and kidney. Very weakly expressed in cerebrum, cerebellum, heart and testis.

The protein localises to the golgi apparatus membrane. Its pathway is protein modification; protein glycosylation. In terms of biological role, N-acetyl glucosamine (GlcNAc) transferase that catalyzes the transfer of GlcNAc via a beta1-&gt;3 linkage from UDP-GlcNAc to the non-reducing terminal galactose (Gal) in the linearly growing chain of N- and O-linked keratan sulfate proteoglycans. Cooperates with B4GALT4 galactosyltransferase and CHST6 and CHST1 sulfotransferases to construct and elongate mono- and disulfated disaccharide units [-&gt;3Galbeta1-&gt;4(6-sulfoGlcNAcbeta)1-&gt;] and [-&gt;3(6-sulfoGalbeta)1-&gt;4(6-sulfoGlcNAcbeta)1-&gt;] within keratan sulfate polymer. Involved in biosynthesis of N-linked keratan sulfate proteoglycans in cornea, with an impact on proteoglycan fibril organization and corneal transparency. May play a role in the maintenance of tissue architecture by suppressing cellular motility and invasion. This is UDP-GlcNAc:betaGal beta-1,3-N-acetylglucosaminyltransferase 7 (B3gnt7) from Mus musculus (Mouse).